We begin with the raw amino-acid sequence, 467 residues long: 3-isopropylmalate dehydratase large subunit (467 aa).

3 residues coordinate [4Fe-4S] cluster: C349, C409, and C412. The segment at 422-443 (PGQRSASTSNRNFEGRQGRGGR) is disordered.

This sequence belongs to the aconitase/IPM isomerase family. LeuC type 1 subfamily. Heterodimer of LeuC and LeuD. The cofactor is [4Fe-4S] cluster.

The catalysed reaction is (2R,3S)-3-isopropylmalate = (2S)-2-isopropylmalate. It participates in amino-acid biosynthesis; L-leucine biosynthesis; L-leucine from 3-methyl-2-oxobutanoate: step 2/4. Functionally, catalyzes the isomerization between 2-isopropylmalate and 3-isopropylmalate, via the formation of 2-isopropylmaleate. The chain is 3-isopropylmalate dehydratase large subunit from Paramagnetospirillum magneticum (strain ATCC 700264 / AMB-1) (Magnetospirillum magneticum).